Consider the following 475-residue polypeptide: tRNA modification GTPase MnmE (475 aa).

(6S)-5-formyl-5,6,7,8-tetrahydrofolate-binding residues include arginine 24, glutamate 81, and lysine 124. Positions glycine 220–glycine 397 constitute a TrmE-type G domain. Residue asparagine 230 participates in K(+) binding. Residues asparagine 230–serine 235, threonine 249–threonine 255, aspartate 274–glycine 277, and serine 378–arginine 380 contribute to the GTP site. Serine 234 contacts Mg(2+). K(+) is bound by residues threonine 249, isoleucine 251, and threonine 254. Threonine 255 serves as a coordination point for Mg(2+). (6S)-5-formyl-5,6,7,8-tetrahydrofolate is bound at residue lysine 475.

This sequence belongs to the TRAFAC class TrmE-Era-EngA-EngB-Septin-like GTPase superfamily. TrmE GTPase family. Homodimer. Heterotetramer of two MnmE and two MnmG subunits. Requires K(+) as cofactor.

Its subcellular location is the cytoplasm. Exhibits a very high intrinsic GTPase hydrolysis rate. Involved in the addition of a carboxymethylaminomethyl (cmnm) group at the wobble position (U34) of certain tRNAs, forming tRNA-cmnm(5)s(2)U34. This Cupriavidus metallidurans (strain ATCC 43123 / DSM 2839 / NBRC 102507 / CH34) (Ralstonia metallidurans) protein is tRNA modification GTPase MnmE.